Reading from the N-terminus, the 607-residue chain is Chaperone protein DnaK (607 aa).

Position 173 is a phosphothreonine; by autocatalysis (Thr173). Basic and acidic residues-rich tracts occupy residues 490–509 (EQNA…RNEA) and 524–542 (GDNV…KEAL). 3 disordered regions span residues 490 to 510 (EQNA…NEAD), 524 to 555 (GDNV…EDIK), and 574 to 607 (QQAQ…KDNK). Positions 574-587 (QQAQQGDAAGSNQS) are enriched in polar residues. Over residues 595-607 (TEVKDDDDKKDNK) the composition is skewed to basic and acidic residues.

The protein belongs to the heat shock protein 70 family.

Acts as a chaperone. The chain is Chaperone protein DnaK from Staphylococcus carnosus (strain TM300).